We begin with the raw amino-acid sequence, 115 residues long: Large ribosomal subunit protein uL22 (115 aa).

The protein belongs to the universal ribosomal protein uL22 family. As to quaternary structure, part of the 50S ribosomal subunit.

In terms of biological role, this protein binds specifically to 23S rRNA; its binding is stimulated by other ribosomal proteins, e.g. L4, L17, and L20. It is important during the early stages of 50S assembly. It makes multiple contacts with different domains of the 23S rRNA in the assembled 50S subunit and ribosome. Functionally, the globular domain of the protein is located near the polypeptide exit tunnel on the outside of the subunit, while an extended beta-hairpin is found that lines the wall of the exit tunnel in the center of the 70S ribosome. The polypeptide is Large ribosomal subunit protein uL22 (Lactiplantibacillus plantarum (strain ATCC BAA-793 / NCIMB 8826 / WCFS1) (Lactobacillus plantarum)).